We begin with the raw amino-acid sequence, 162 residues long: uncharacterized protein (162 aa).

It to R.meliloti R02472.

This is an uncharacterized protein from Escherichia coli (strain K12).